Consider the following 148-residue polypeptide: Protoporphyrinogen IX oxidase (148 aa).

4 helical membrane-spanning segments follow: residues Y7–F27, S58–I78, G86–C106, and F128–F148. Heme is bound at residue H15. Position 92 (K92) interacts with heme.

It belongs to the HemJ family. Homodimer. Requires heme b as cofactor.

The protein localises to the cell membrane. The catalysed reaction is protoporphyrinogen IX + 3 A = protoporphyrin IX + 3 AH2. The protein operates within porphyrin-containing compound metabolism; protoporphyrin-IX biosynthesis; protoporphyrin-IX from protoporphyrinogen-IX: step 1/1. Its function is as follows. Catalyzes the oxidation of protoporphyrinogen IX to protoporphyrin IX. Is involved in the biosynthesis of tetrapyrrole molecules like heme. Does not use oxygen or artificial electron acceptors such as menadione or benzoquinone. The polypeptide is Protoporphyrinogen IX oxidase (Helicobacter pylori (strain ATCC 700392 / 26695) (Campylobacter pylori)).